The sequence spans 327 residues: Serine/threonine-protein phosphatase alpha-1 isoform (327 aa).

Positions 62, 64, 90, and 122 each coordinate Mn(2+). The Proton donor role is filled by histidine 123. Mn(2+)-binding residues include histidine 171 and histidine 246. Positions 308–327 are disordered; the sequence is GSSGRPLTPPRGANNKNKKK. Phosphothreonine is present on threonine 315.

This sequence belongs to the PPP phosphatase family. PP-1 subfamily. As to quaternary structure, interacts with Nop17l. Requires Mn(2+) as cofactor.

The enzyme catalyses O-phospho-L-seryl-[protein] + H2O = L-seryl-[protein] + phosphate. The catalysed reaction is O-phospho-L-threonyl-[protein] + H2O = L-threonyl-[protein] + phosphate. The sequence is that of Serine/threonine-protein phosphatase alpha-1 isoform (Pp1alpha-96A) from Drosophila melanogaster (Fruit fly).